The following is an 81-amino-acid chain: Small ribosomal subunit protein bS18 (81 aa).

The protein belongs to the bacterial ribosomal protein bS18 family. Part of the 30S ribosomal subunit. Forms a tight heterodimer with protein bS6.

Binds as a heterodimer with protein bS6 to the central domain of the 16S rRNA, where it helps stabilize the platform of the 30S subunit. The protein is Small ribosomal subunit protein bS18 of Syntrophobacter fumaroxidans (strain DSM 10017 / MPOB).